We begin with the raw amino-acid sequence, 78 residues long: Myrmicitoxin-Ta2a (78 aa).

A signal peptide spans 1 to 26; that stretch reads MKLSFLSLALAIIFVTVLIYAPQAEA. Positions 27–56 are excised as a propeptide; it reads KALADAVADADADADAAADAVADALADADA. Residue lysine 77 is modified to Lysine amide.

This sequence belongs to the formicidae venom precursor-01 superfamily. Expressed by the venom gland.

The protein localises to the secreted. Functionally, peptide with toxicity towards insects that may also act as antimicrobial peptide. Causes calcium influx in F11 cells (EC(50)=5.8 nM), possibly by modulating sodium channels (Nav). In vivo, is lethal to insects, but does not show toxicity to vertebrates. Intraplantar injection into mice does not induce spontaneous nocifensive behaviors up to a dose of 200 pmol. The protein is Myrmicitoxin-Ta2a of Tetramorium africanum (Fierce ant).